The primary structure comprises 329 residues: Ferredoxin--NADP reductase 2 (329 aa).

FAD contacts are provided by T18, E37, Q45, Y50, V90, F124, D285, and S326.

This sequence belongs to the ferredoxin--NADP reductase type 2 family. In terms of assembly, homodimer. FAD serves as cofactor.

It catalyses the reaction 2 reduced [2Fe-2S]-[ferredoxin] + NADP(+) + H(+) = 2 oxidized [2Fe-2S]-[ferredoxin] + NADPH. This is Ferredoxin--NADP reductase 2 from Bacillus mycoides (strain KBAB4) (Bacillus weihenstephanensis).